The primary structure comprises 352 residues: MFDLNQSLFLRALRRQPVERTPIWIMRQAGRYLPEYRKVREHAGDFLNLCKNPELACEVTLQPLRRYALDAAILFSDILTIPDAMGLGLYFAEGEGPCFTNPLQDTKAIHALKIPSIPESLSYVFDAARLIRQEMPKELPLIGFSGSPWTLACYMVEGGSSRDFKRILNLIYTEKEAAHLLLNKLAVSVTAYLTEQIKAGVNAVMIFDTWGGVLTPQNYKDFSLAYMHQIVQQLKNEYPDIPVILFTKNGGQWLEWMAETGCDALGVDWTCDLASARKRVGGKVALQGNLDPAVLLTAKNCIRREVGSVLASYGYGTGHIFNLGHGITPDVPPENVAIMIEAVHEISPQYHL.

Residues 27–31 (RQAGR), D77, Y154, T209, and H325 contribute to the substrate site.

The protein belongs to the uroporphyrinogen decarboxylase family. Homodimer.

It is found in the cytoplasm. It catalyses the reaction uroporphyrinogen III + 4 H(+) = coproporphyrinogen III + 4 CO2. It participates in porphyrin-containing compound metabolism; protoporphyrin-IX biosynthesis; coproporphyrinogen-III from 5-aminolevulinate: step 4/4. Its function is as follows. Catalyzes the decarboxylation of four acetate groups of uroporphyrinogen-III to yield coproporphyrinogen-III. The polypeptide is Uroporphyrinogen decarboxylase (Legionella pneumophila (strain Paris)).